The primary structure comprises 418 residues: Serine hydroxymethyltransferase (418 aa).

(6S)-5,6,7,8-tetrahydrofolate-binding positions include Leu-120 and 124-126; that span reads GHL. Lys-229 is subject to N6-(pyridoxal phosphate)lysine.

It belongs to the SHMT family. Homodimer. Pyridoxal 5'-phosphate is required as a cofactor.

The protein resides in the cytoplasm. It catalyses the reaction (6R)-5,10-methylene-5,6,7,8-tetrahydrofolate + glycine + H2O = (6S)-5,6,7,8-tetrahydrofolate + L-serine. It functions in the pathway one-carbon metabolism; tetrahydrofolate interconversion. The protein operates within amino-acid biosynthesis; glycine biosynthesis; glycine from L-serine: step 1/1. Its function is as follows. Catalyzes the reversible interconversion of serine and glycine with tetrahydrofolate (THF) serving as the one-carbon carrier. This reaction serves as the major source of one-carbon groups required for the biosynthesis of purines, thymidylate, methionine, and other important biomolecules. Also exhibits THF-independent aldolase activity toward beta-hydroxyamino acids, producing glycine and aldehydes, via a retro-aldol mechanism. This Myxococcus xanthus (strain DK1622) protein is Serine hydroxymethyltransferase.